A 384-amino-acid chain; its full sequence is Guanine nucleotide-binding protein alpha-1 subunit (384 aa).

Residues 1-22 (MGSLCSRNKHYSQADDEENTQT) are disordered. Gly-2 carries N-myristoyl glycine lipidation. Cys-5 is lipidated: S-palmitoyl cysteine. The 347-residue stretch at 38–384 (HIQKLLLLGA…RRNLFEAGLL (347 aa)) folds into the G-alpha domain. Residues 41–54 (KLLLLGAGDSGKST) form a G1 motif region. GTP is bound by residues Asp-49, Ser-50, Gly-51, Lys-52, Ser-53, Thr-54, Asp-163, Leu-188, Thr-194, Gly-222, Asn-288, Lys-289, Asp-291, and Ala-356. Ser-53 provides a ligand contact to Mg(2+). The interval 186–194 (DVLFARIRT) is G2 motif. Thr-194 provides a ligand contact to Mg(2+). The tract at residues 215-224 (YRLFDVGGQR) is G3 motif. Residues 284-291 (MLFLNKFD) are G4 motif. Positions 354–359 (TTALDQ) are G5 motif.

This sequence belongs to the G-alpha family. In terms of assembly, g proteins are composed of 3 units; alpha, beta and gamma. The alpha chain contains the guanine nucleotide binding site. Mg(2+) is required as a cofactor.

Its function is as follows. Guanine nucleotide-binding proteins (G proteins) are involved as modulators or transducers in various transmembrane signaling systems. The chain is Guanine nucleotide-binding protein alpha-1 subunit (GPA1) from Solanum tuberosum (Potato).